Consider the following 434-residue polypeptide: Nicotinate phosphoribosyltransferase (434 aa).

His-242 bears the Phosphohistidine; by autocatalysis mark.

This sequence belongs to the NAPRTase family. In terms of processing, transiently phosphorylated on a His residue during the reaction cycle. Phosphorylation strongly increases the affinity for substrates and increases the rate of nicotinate D-ribonucleotide production. Dephosphorylation regenerates the low-affinity form of the enzyme, leading to product release.

The catalysed reaction is nicotinate + 5-phospho-alpha-D-ribose 1-diphosphate + ATP + H2O = nicotinate beta-D-ribonucleotide + ADP + phosphate + diphosphate. Its pathway is cofactor biosynthesis; NAD(+) biosynthesis; nicotinate D-ribonucleotide from nicotinate: step 1/1. Functionally, catalyzes the synthesis of beta-nicotinate D-ribonucleotide from nicotinate and 5-phospho-D-ribose 1-phosphate at the expense of ATP. The sequence is that of Nicotinate phosphoribosyltransferase from Mesorhizobium japonicum (strain LMG 29417 / CECT 9101 / MAFF 303099) (Mesorhizobium loti (strain MAFF 303099)).